The following is a 492-amino-acid chain: N-succinylglutamate 5-semialdehyde dehydrogenase (492 aa).

Position 220 to 225 (220 to 225 (GSASTG)) interacts with NAD(+). Active-site residues include glutamate 243 and cysteine 277.

It belongs to the aldehyde dehydrogenase family. AstD subfamily.

It carries out the reaction N-succinyl-L-glutamate 5-semialdehyde + NAD(+) + H2O = N-succinyl-L-glutamate + NADH + 2 H(+). It functions in the pathway amino-acid degradation; L-arginine degradation via AST pathway; L-glutamate and succinate from L-arginine: step 4/5. Functionally, catalyzes the NAD-dependent reduction of succinylglutamate semialdehyde into succinylglutamate. This Salmonella typhimurium (strain LT2 / SGSC1412 / ATCC 700720) protein is N-succinylglutamate 5-semialdehyde dehydrogenase.